The sequence spans 1098 residues: Probable DNA-directed RNA polymerase (1098 aa).

Over residues 1-24 the composition is skewed to basic and acidic residues; it reads PIRESVRVSTDRDPDLEDEKREQL. The disordered stretch occupies residues 1-26; the sequence is PIRESVRVSTDRDPDLEDEKREQLGE. Active-site residues include D663, K750, and D915.

This sequence belongs to the phage and mitochondrial RNA polymerase family.

Its subcellular location is the mitochondrion. The catalysed reaction is RNA(n) + a ribonucleoside 5'-triphosphate = RNA(n+1) + diphosphate. Functionally, DNA-dependent RNA polymerase catalyzes the transcription of DNA into RNA using the four ribonucleoside triphosphates as substrates. This is Probable DNA-directed RNA polymerase from Zea mays (Maize).